The chain runs to 419 residues: Tyrosine--tRNA ligase (419 aa).

An L-tyrosine-binding site is contributed by Y34. The short motif at 39–48 (PTADSLHLGN) is the 'HIGH' region element. L-tyrosine-binding residues include Y169 and Q173. The 'KMSKS' region motif lies at 229-233 (KFGKS). Residue K232 participates in ATP binding. The S4 RNA-binding domain occupies 353-419 (LTLVELLISA…GKKKNFVLTY (67 aa)).

Belongs to the class-I aminoacyl-tRNA synthetase family. TyrS type 1 subfamily. As to quaternary structure, homodimer.

It is found in the cytoplasm. It catalyses the reaction tRNA(Tyr) + L-tyrosine + ATP = L-tyrosyl-tRNA(Tyr) + AMP + diphosphate + H(+). In terms of biological role, catalyzes the attachment of tyrosine to tRNA(Tyr) in a two-step reaction: tyrosine is first activated by ATP to form Tyr-AMP and then transferred to the acceptor end of tRNA(Tyr). In Lactococcus lactis subsp. lactis (strain IL1403) (Streptococcus lactis), this protein is Tyrosine--tRNA ligase.